A 92-amino-acid chain; its full sequence is PqqA binding protein (92 aa).

This sequence belongs to the PqqD family. As to quaternary structure, monomer. Interacts with PqqE.

It participates in cofactor biosynthesis; pyrroloquinoline quinone biosynthesis. In terms of biological role, functions as a PqqA binding protein and presents PqqA to PqqE, in the pyrroloquinoline quinone (PQQ) biosynthetic pathway. The chain is PqqA binding protein from Xanthomonas euvesicatoria pv. vesicatoria (strain 85-10) (Xanthomonas campestris pv. vesicatoria).